Reading from the N-terminus, the 210-residue chain is Fibroblast growth factor 8 (210 aa).

The first 27 residues, 1 to 27 (MRLIPSRLSYLFLHLFAFCYYAQVTIQ), serve as a signal peptide directing secretion.

The protein belongs to the heparin-binding growth factors family. In terms of assembly, monomer. Homodimer.

The protein localises to the secreted. Plays an important role in the regulation of embryonic development, cell proliferation, cell differentiation and cell migration. Required for Kupffer's vesicle ciliogenesis. The polypeptide is Fibroblast growth factor 8 (Danio rerio (Zebrafish)).